A 339-amino-acid polypeptide reads, in one-letter code: Pre-mRNA-splicing factor syf2 (339 aa).

The segment at 1-136 is disordered; the sequence is MPPEKKRKTE…LQSDPSQLTA (136 aa). A compositionally biased stretch (basic and acidic residues) spans 7-16; sequence RKTEPEDKAE. Positions 17–37 are enriched in polar residues; sequence VTQQENDVAESTTEPNNQTVT. Residues 45–93 show a composition bias toward low complexity; that stretch reads VTEAALATTSSSSPPVLSASETAQPDTAATSQSSSTPPTSTSAAESAAA. Residues 94-103 are compositionally biased toward basic and acidic residues; that stretch reads KARERAERFR. Over residues 126-135 the composition is skewed to polar residues; it reads RLQSDPSQLT.

This sequence belongs to the SYF2 family. As to quaternary structure, associated with the spliceosome.

It is found in the nucleus. In terms of biological role, involved in pre-mRNA splicing. This Neurospora crassa (strain ATCC 24698 / 74-OR23-1A / CBS 708.71 / DSM 1257 / FGSC 987) protein is Pre-mRNA-splicing factor syf2 (msp-4).